The sequence spans 348 residues: Selenide, water dikinase (348 aa).

Cys17 is a catalytic residue. ATP-binding positions include Lys20 and 47–49 (THD). Asp50 is a Mg(2+) binding site. ATP is bound by residues Asp67, Asp90, and 138–140 (GHT). Asp90 is a Mg(2+) binding site. Asp226 contacts Mg(2+).

Belongs to the selenophosphate synthase 1 family. Class I subfamily. In terms of assembly, homodimer. Mg(2+) is required as a cofactor.

The catalysed reaction is hydrogenselenide + ATP + H2O = selenophosphate + AMP + phosphate + 2 H(+). Its function is as follows. Synthesizes selenophosphate from selenide and ATP. In Porphyromonas gingivalis (strain ATCC 33277 / DSM 20709 / CIP 103683 / JCM 12257 / NCTC 11834 / 2561), this protein is Selenide, water dikinase.